Consider the following 521-residue polypeptide: Bifunctional purine biosynthesis protein PurH (521 aa).

An MGS-like domain is found at 1–145 (MIKQALISVS…KNHRDVTVVV (145 aa)).

The protein belongs to the PurH family.

The catalysed reaction is (6R)-10-formyltetrahydrofolate + 5-amino-1-(5-phospho-beta-D-ribosyl)imidazole-4-carboxamide = 5-formamido-1-(5-phospho-D-ribosyl)imidazole-4-carboxamide + (6S)-5,6,7,8-tetrahydrofolate. It catalyses the reaction IMP + H2O = 5-formamido-1-(5-phospho-D-ribosyl)imidazole-4-carboxamide. It participates in purine metabolism; IMP biosynthesis via de novo pathway; 5-formamido-1-(5-phospho-D-ribosyl)imidazole-4-carboxamide from 5-amino-1-(5-phospho-D-ribosyl)imidazole-4-carboxamide (10-formyl THF route): step 1/1. The protein operates within purine metabolism; IMP biosynthesis via de novo pathway; IMP from 5-formamido-1-(5-phospho-D-ribosyl)imidazole-4-carboxamide: step 1/1. The chain is Bifunctional purine biosynthesis protein PurH from Burkholderia pseudomallei (strain 1106a).